The primary structure comprises 340 residues: GTP 3',8-cyclase (340 aa).

The region spanning R20 to K246 is the Radical SAM core domain. R29 is a GTP binding site. The [4Fe-4S] cluster site is built by C36 and C40. Y42 is a binding site for S-adenosyl-L-methionine. C43 is a binding site for [4Fe-4S] cluster. Residue R79 participates in GTP binding. G83 contacts S-adenosyl-L-methionine. T110 serves as a coordination point for GTP. Residue S134 participates in S-adenosyl-L-methionine binding. Residue K171 participates in GTP binding. Position 205 (M205) interacts with S-adenosyl-L-methionine. The [4Fe-4S] cluster site is built by C268 and C271. R273–R275 serves as a coordination point for GTP. C285 is a binding site for [4Fe-4S] cluster.

Belongs to the radical SAM superfamily. MoaA family. Monomer and homodimer. It depends on [4Fe-4S] cluster as a cofactor.

It catalyses the reaction GTP + AH2 + S-adenosyl-L-methionine = (8S)-3',8-cyclo-7,8-dihydroguanosine 5'-triphosphate + 5'-deoxyadenosine + L-methionine + A + H(+). It participates in cofactor biosynthesis; molybdopterin biosynthesis. Its function is as follows. Catalyzes the cyclization of GTP to (8S)-3',8-cyclo-7,8-dihydroguanosine 5'-triphosphate. The chain is GTP 3',8-cyclase from Actinobacillus pleuropneumoniae serotype 7 (strain AP76).